Here is a 319-residue protein sequence, read N- to C-terminus: Cytochrome c biogenesis protein CcsA (319 aa).

7 consecutive transmembrane segments (helical) span residues 9-29 (ILTH…LITL), 44-64 (GVIG…AYSG), 71-91 (LYES…FPYL), 143-163 (MVLG…LLVI), 225-245 (IISL…VWAN), 259-273 (TWAF…IYLH), and 286-306 (AIVA…VNLL).

This sequence belongs to the CcmF/CycK/Ccl1/NrfE/CcsA family. May interact with Ccs1.

The protein resides in the plastid. It is found in the chloroplast thylakoid membrane. Its function is as follows. Required during biogenesis of c-type cytochromes (cytochrome c6 and cytochrome f) at the step of heme attachment. The polypeptide is Cytochrome c biogenesis protein CcsA (Oenothera argillicola (Appalachian evening primrose)).